We begin with the raw amino-acid sequence, 210 residues long: Glycerol-3-phosphate acyltransferase (210 aa).

5 helical membrane-spanning segments follow: residues methionine 1–glycine 21, glycine 53–alanine 73, isoleucine 87–tryptophan 107, valine 122–leucine 142, and isoleucine 147–proline 167.

Belongs to the PlsY family. As to quaternary structure, probably interacts with PlsX.

The protein localises to the cell inner membrane. It carries out the reaction an acyl phosphate + sn-glycerol 3-phosphate = a 1-acyl-sn-glycero-3-phosphate + phosphate. It participates in lipid metabolism; phospholipid metabolism. In terms of biological role, catalyzes the transfer of an acyl group from acyl-phosphate (acyl-PO(4)) to glycerol-3-phosphate (G3P) to form lysophosphatidic acid (LPA). This enzyme utilizes acyl-phosphate as fatty acyl donor, but not acyl-CoA or acyl-ACP. This is Glycerol-3-phosphate acyltransferase from Synechococcus elongatus (strain ATCC 33912 / PCC 7942 / FACHB-805) (Anacystis nidulans R2).